The following is a 148-amino-acid chain: Small ribosomal subunit protein eS19 (148 aa).

This sequence belongs to the eukaryotic ribosomal protein eS19 family. Part of the 30S ribosomal subunit.

In terms of biological role, may be involved in maturation of the 30S ribosomal subunit. The polypeptide is Small ribosomal subunit protein eS19 (Methanocaldococcus jannaschii (strain ATCC 43067 / DSM 2661 / JAL-1 / JCM 10045 / NBRC 100440) (Methanococcus jannaschii)).